A 479-amino-acid chain; its full sequence is MYGETTLNKNHVIKFIKLKINNCLGCDEVEINFSKADNVHIIIYSLVTDMAKDLPAVTPVAQAILLLCSLTYPDSDSLETIPQLKIGKGSVSMSFKVYPVNKEEETEPESESDLDEGPSTSKQALERMVQRAERKAKEASTRNVHSKGIYVNVERRFDMYFALDTVSYYINGGKRQSCPLPEFHAKFFVRPQHSINLLRQLHEKCSGNWLKVIQSDGDGDAFKKFKDPDSPFETFVKLFESNPIKPNDMMGKLAKTCLHVNEAVRLTEREFILEVFNQVRHIFEYITAQEYTVWFLVPCLGDKDQLRSKTLEDFDLTKVRTSIRRAGDTSNIWWDHTDHNIKDILLVAFQLDLATHVNQSVLVISHLETLAEFSTMQYVTAFFMNDFYAKKNTEPKWICHRYLERIIDVALFLGVIVIIEYPSAFTLLQEGRHLIKCFQKENADSSRTSQWEIFEDVVKENESDLEFLKEAVGKVQQNV.

Positions 102–140 are disordered; sequence KEEETEPESESDLDEGPSTSKQALERMVQRAERKAKEAS. A compositionally biased stretch (acidic residues) spans 104-116; sequence EETEPESESDLDE. Over residues 124–140 the composition is skewed to basic and acidic residues; that stretch reads ALERMVQRAERKAKEAS.

As to quaternary structure, interacts with Sce.

The protein localises to the nucleus. It is found in the chromosome. Its subcellular location is the centromere. In terms of biological role, essential for proper maintenance of sister-chromatid cohesion in both male and female meiosis. Mutations in ord cause premature separation of the sister chromatids in meiosis I and random segregation in both meiotic divisions. Required for chiasma maintenance in female meiosis. Mutations in ord reduce recombination in female meiosis. The protein is Protein ORD (ord) of Drosophila melanogaster (Fruit fly).